The chain runs to 388 residues: LL-diaminopimelate aminotransferase (388 aa).

Residues Y16 and G41 each coordinate substrate. Pyridoxal 5'-phosphate-binding positions include Y70, 104 to 105 (SK), Y129, N179, Y210, and 239 to 241 (SLS). Residues K105, Y129, and N179 each contribute to the substrate site. An N6-(pyridoxal phosphate)lysine modification is found at K242. Pyridoxal 5'-phosphate is bound at residue R250. Residue R368 coordinates substrate.

Belongs to the class-I pyridoxal-phosphate-dependent aminotransferase family. LL-diaminopimelate aminotransferase subfamily. Homodimer. Pyridoxal 5'-phosphate is required as a cofactor.

The enzyme catalyses (2S,6S)-2,6-diaminopimelate + 2-oxoglutarate = (S)-2,3,4,5-tetrahydrodipicolinate + L-glutamate + H2O + H(+). The protein operates within amino-acid biosynthesis; L-lysine biosynthesis via DAP pathway; LL-2,6-diaminopimelate from (S)-tetrahydrodipicolinate (aminotransferase route): step 1/1. Functionally, involved in the synthesis of meso-diaminopimelate (m-DAP or DL-DAP), required for both lysine and peptidoglycan biosynthesis. Catalyzes the direct conversion of tetrahydrodipicolinate to LL-diaminopimelate. In Maridesulfovibrio salexigens (strain ATCC 14822 / DSM 2638 / NCIMB 8403 / VKM B-1763) (Desulfovibrio salexigens), this protein is LL-diaminopimelate aminotransferase.